Here is a 953-residue protein sequence, read N- to C-terminus: Coatomer subunit beta (953 aa).

Threonine 2 bears the N-acetylthreonine mark. HEAT repeat units follow at residues histidine 96–glutamate 131, leucine 132–histidine 168, serine 240–threonine 276, alanine 277–histidine 314, arginine 316–valine 353, and aspartate 396–asparagine 433. At lysine 494 the chain carries N6-acetyllysine.

In terms of assembly, oligomeric complex that consists of at least the alpha, beta, beta', gamma, delta, epsilon and zeta subunits. Interacts with ARF1 (myristoylated); this interaction is required for binding of COPB1 to Golgi membranes. Interacts with CAPN8 and PRKCE. Interacts with SCYL1. Interacts with COPG1. Interacts (via trunk domain) with ARF1 (via switch I region); the interaction is direct. Interacts with KCNK2 (via N-terminus); this interaction increases the channel-mediated whole cell currents and promotes plasma membrane expression of KCNK2. Interacts with STX17. Interacts with TMEM115. Interacts with TMEM41B. Proteolytically cleaved between Ser-528 and Ser-529 by CAPN8.

The protein resides in the cytoplasm. It localises to the cytosol. Its subcellular location is the golgi apparatus membrane. The protein localises to the cytoplasmic vesicle. It is found in the COPI-coated vesicle membrane. The protein resides in the cell membrane. It localises to the endoplasmic reticulum-Golgi intermediate compartment. The coatomer is a cytosolic protein complex that binds to dilysine motifs and reversibly associates with Golgi non-clathrin-coated vesicles, which further mediate biosynthetic protein transport from the ER, via the Golgi up to the trans Golgi network. Coatomer complex is required for budding from Golgi membranes, and is essential for the retrograde Golgi-to-ER transport of dilysine-tagged proteins. In mammals, the coatomer can only be recruited by membranes associated to ADP-ribosylation factors (ARFs), which are small GTP-binding proteins; the complex also influences the Golgi structural integrity, as well as the processing, activity, and endocytic recycling of LDL receptors. Involved in the Golgi disassembly and reassembly processes during cell cycle. Plays a functional role in facilitating the transport of kappa-type opioid receptor mRNAs into axons and enhances translation of these proteins. Required for limiting lipid storage in lipid droplets. Involved in lipid homeostasis by regulating the presence of perilipin family members PLIN2 and PLIN3 at the lipid droplet surface and promoting the association of adipocyte surface triglyceride lipase (PNPLA2) with the lipid droplet to mediate lipolysis. Involved in autophagy by playing a role in early endosome function. Plays a role in organellar compartmentalization of secretory compartments including endoplasmic reticulum (ER)-Golgi intermediate compartment (ERGIC), Golgi, trans-Golgi network (TGN) and recycling endosomes, and in biosynthetic transport of CAV1. The sequence is that of Coatomer subunit beta (COPB1) from Bos taurus (Bovine).